The primary structure comprises 289 residues: Transcriptional regulator Rob (289 aa).

One can recognise an HTH araC/xylS-type domain in the interval 8-106 (RDLLIWLEGH…SQTPALYRRS (99 aa)). 2 consecutive DNA-binding regions (H-T-H motif) follow at residues 25–46 (DNVA…KDVT) and 73–96 (ILDI…KKQF).

Transcriptional regulator. Represses transcription of genes belonging to the flagellar regulon, including flhD, flhB and fliC; probably thereby leading to repression of motility. Binds to regulatory regions of target genes, including the promoters of the flhDC operon and of P-type ATPase mgtA. Involved in post-transcriptional regulation of expression. Represses expression of the flhDC operon in a post-transcriptional manner. Binds to the right arm of the replication origin oriC of the chromosome. Rob binding may influence the formation of the nucleoprotein structure, required for oriC function in the initiation of replication. The protein is Transcriptional regulator Rob of Salmonella typhimurium (strain LT2 / SGSC1412 / ATCC 700720).